Here is a 342-residue protein sequence, read N- to C-terminus: Glycerol-3-phosphate dehydrogenase [NAD(P)+] (342 aa).

Tryptophan 11, arginine 33, and lysine 112 together coordinate NADPH. Sn-glycerol 3-phosphate contacts are provided by lysine 112, glycine 147, and serine 149. Alanine 151 contacts NADPH. Sn-glycerol 3-phosphate-binding residues include lysine 202, aspartate 255, serine 265, arginine 266, and asparagine 267. Residue lysine 202 is the Proton acceptor of the active site. Residue arginine 266 coordinates NADPH. Valine 290 and glutamate 292 together coordinate NADPH.

This sequence belongs to the NAD-dependent glycerol-3-phosphate dehydrogenase family.

The protein localises to the cytoplasm. It catalyses the reaction sn-glycerol 3-phosphate + NAD(+) = dihydroxyacetone phosphate + NADH + H(+). The enzyme catalyses sn-glycerol 3-phosphate + NADP(+) = dihydroxyacetone phosphate + NADPH + H(+). The protein operates within membrane lipid metabolism; glycerophospholipid metabolism. Functionally, catalyzes the reduction of the glycolytic intermediate dihydroxyacetone phosphate (DHAP) to sn-glycerol 3-phosphate (G3P), the key precursor for phospholipid synthesis. The chain is Glycerol-3-phosphate dehydrogenase [NAD(P)+] from Cupriavidus metallidurans (strain ATCC 43123 / DSM 2839 / NBRC 102507 / CH34) (Ralstonia metallidurans).